Reading from the N-terminus, the 371-residue chain is Undecaprenyl-diphosphatase 1 (371 aa).

3 consecutive transmembrane segments (helical) span residues 53–73, 100–120, and 126–146; these read PYLAFIVAVHVATAAALIVAF, LAWLIILGTVPVGIVGLLLEH, and LGRPLPAAVFLTVNGMIMLLG. The interval 152–226 is disordered; the sequence is RSTTRGAPGP…PEAEDVTLPE (75 aa). Helical transmembrane passes span 291–311, 322–342, and 351–371; these read FAFLLATPVILAAGLLKLPDL, QTLFGAIVAGVVAYVSIRFLA, and TPFAVYCLVAGALCVVRFGIF.

The protein belongs to the UppP family.

It localises to the cell membrane. The catalysed reaction is di-trans,octa-cis-undecaprenyl diphosphate + H2O = di-trans,octa-cis-undecaprenyl phosphate + phosphate + H(+). Its function is as follows. Catalyzes the dephosphorylation of undecaprenyl diphosphate (UPP). Confers resistance to bacitracin. This Frankia casuarinae (strain DSM 45818 / CECT 9043 / HFP020203 / CcI3) protein is Undecaprenyl-diphosphatase 1.